Here is a 785-residue protein sequence, read N- to C-terminus: Protein SEY1 (785 aa).

The Cytoplasmic portion of the chain corresponds to 1–690; it reads MTDLEVSAIQ…KRSVINSKTE (690 aa). One can recognise a GB1/RHD3-type G domain in the interval 40 to 266; the sequence is GLNYHIVSVF…SEDQLFNEGY (227 aa). 50 to 57 contacts GTP; sequence GSQSTGKS. Residues 451–479 are a coiled coil; the sequence is PKLRELEEELSNLRTELVNKEQENIKTKI. Residues 691-711 form a helical membrane-spanning segment; the sequence is VPLYIYALLLVLGWNEFMIIL. At 712–714 the chain is on the lumenal side; sequence RNP. Residues 715–735 traverse the membrane as a helical segment; that stretch reads LLITLLLIGLTGLYLGYKTKL. Over 736 to 785 the chain is Cytoplasmic; the sequence is LGPIVQVVQAMIQELQDQAKNKLRDVLVSEPEAPSQVRIGKEVDATKDED.

Belongs to the TRAFAC class dynamin-like GTPase superfamily. GB1/RHD3 GTPase family. RHD3 subfamily.

It is found in the endoplasmic reticulum membrane. Functionally, cooperates with the reticulon proteins and tubule-shaping DP1 family proteins to generate and maintain the structure of the tubular endoplasmic reticulum network. Has GTPase activity, which is required for its function in ER organization. This Komagataella phaffii (strain GS115 / ATCC 20864) (Yeast) protein is Protein SEY1.